The following is a 482-amino-acid chain: Complement C1r subcomponent-like protein (482 aa).

The first 43 residues, 1 to 43 (MSGFRGLVPELENSLWSSPTTSCMSKMCWWLLWGILHTCPTQA), serve as a signal peptide directing secretion. Residues 44 to 166 (SVLLAQQSPQ…KGFLALYQAV (123 aa)) form the CUB domain. Intrachain disulfides connect cysteine 97/cysteine 115 and cysteine 190/cysteine 223. Positions 166–225 (VAVNQPNGDTEAVTTPGAPKIQNHCQDPYYKADQTGTLSCPSSWKWKDRQDGGEVPECVP) constitute a Sushi domain. A Peptidase S1 domain is found at 240–479 (TFGSSRAKLG…YMDWIKRVIE (240 aa)). Residues histidine 278 and aspartate 334 each act as charge relay system in the active site. The N-linked (GlcNAc...) asparagine glycan is linked to asparagine 358. 2 disulfides stabilise this stretch: cysteine 397–cysteine 416 and cysteine 427–cysteine 457. The active-site Charge relay system is the serine 431.

This sequence belongs to the peptidase S1 family. As to expression, expressed in liver (at protein level).

Its subcellular location is the secreted. Mediates the proteolytic cleavage of HP/haptoglobin in the endoplasmic reticulum. This Mus musculus (Mouse) protein is Complement C1r subcomponent-like protein (C1rl).